The chain runs to 865 residues: MAVARVDAALPPGEGSVVNWSGQGLQKLGPNLPCEADIHTLILDKNQIIKLENLEKCKRLIQLSVANNRLVRMMGVAKLTLLRVLNLPHNSIGCVEGLKELVHLEWLNLAGNNLKAMEQINSCTALQHLDLSDNNISQIGDLSKLVSLKTLLLHGNIITSLRMAPAYLPRSLAILSLAENEIRDLNEISFLASLTELEQLSIMNNPCVMATPSIPGFDYRPYIVSWCLNLRVLDGYVISQKESLKAEWLYSQGKGRAYRPGQHIQLVQYLATVCPLTSTLGLQTAEDAKLEKILSKQRFHQRQLMNQSQNEELSPLVPVETRASLIPEHSSPVQDCQISQESEPVIQVNSWVGINSNDDQLFAVKNNFPASVHTTRYSRNDLHLEDIQTDEDKLNCSLLSSESTFMPVASGLSPLSPTVELRLQGINLGLEDDGVADESVKGLESQVLDKEEEQPLWAANENSVQMMRSEINTEVNEKAGLLPCPEPTIISAILKDDNHSLTFFPESTEQKQSDIKKPENTQPENKETISQATSEKLPMILTQRSVALGQDKVALQKLNDAATKLQACWRGFYARNYNPQAKDVRYEIRLRRMQEHIVCLTDEIRRLRKERDEERIKKFVQEEAFRFLWNQVRSLQVWQQTVDQRLSSWHTDVPPISSTLVPSKHPLFTQSQESSCDQNADWFIASDVAPQEKSLPEFPDSGFHSSLTEQVHSLQHSLDFEKSSTEGSESSIMGNSIDTVRYGKESDLGDVSEEHGEWNKESSNNEQDNSLLEQYLTSVQQLEDADERTNFDTETRDSKLHIACFPVQLDTLSDGASVDESHGISPPLQGEISQTQENSKLNAEVQGQQPECDSTFQLLHVGVTV.

LRR repeat units follow at residues 37–58, 59–80, 81–102, 103–124, 125–146, 147–168, 171–192, and 196–205; these read DIHT…EKCK, RLIQ…AKLT, LLRV…KELV, HLEW…NSCT, ALQH…SKLV, SLKT…PAYL, SLAI…SFLA, and ELEQLSIMNN. One can recognise an LRRCT domain in the interval 211–249; sequence TPSIPGFDYRPYIVSWCLNLRVLDGYVISQKESLKAEWL. A CCP110-binding region spans residues 300 to 750; sequence HQRQLMNQSQ…RYGKESDLGD (451 aa). Ser-308, Ser-413, and Ser-500 each carry phosphoserine. A disordered region spans residues 506–529; the sequence is ESTEQKQSDIKKPENTQPENKETI. Over residues 508-527 the composition is skewed to basic and acidic residues; the sequence is TEQKQSDIKKPENTQPENKE. Ser-530 carries the post-translational modification Phosphoserine. Phosphothreonine is present on Thr-542. Positions 558–587 constitute an IQ domain; the sequence is LNDAATKLQACWRGFYARNYNPQAKDVRYE. Residues 587–865 are interaction with MPHOSPH9; that stretch reads EIRLRRMQEH…FQLLHVGVTV (279 aa). The tract at residues 715–769 is disordered; it reads QHSLDFEKSSTEGSESSIMGNSIDTVRYGKESDLGDVSEEHGEWNKESSNNEQDN. The segment covering 725 to 738 has biased composition (polar residues); sequence TEGSESSIMGNSID. The segment covering 741–760 has biased composition (basic and acidic residues); sequence RYGKESDLGDVSEEHGEWNK. Residue Ser-763 is modified to Phosphoserine.

In terms of assembly, interacts with CALM1, CEP76, KIF24 and TALPID3. Interacts with CCP110. ENKD1 competes with CEP97 for binding to CCP110, destabilizing the interaction between CP110 and CEP97 which promotes the removal of CCP110 and CEP97 from the mother centriole and allows the initiation of ciliogenesis. Via its interaction with CCP110, may indirectly interact with HERC2 and NEURL4. Interacts with MPHOSPH9.

Its subcellular location is the cytoplasm. It localises to the cytoskeleton. The protein resides in the microtubule organizing center. It is found in the centrosome. The protein localises to the centriole. Acts as a key negative regulator of ciliogenesis in collaboration with CCP110 by capping the mother centriole thereby preventing cilia formation. Required for recruitment of CCP110 to the centrosome. The polypeptide is Centrosomal protein of 97 kDa (CEP97) (Homo sapiens (Human)).